Here is a 348-residue protein sequence, read N- to C-terminus: Alcohol dehydrogenase 1 (348 aa).

Positions 44, 67, 98, 101, 104, 112, and 154 each coordinate Zn(2+). Residues G178–G184, D202, K207, V269–L271, and R341 each bind NAD(+).

This sequence belongs to the zinc-containing alcohol dehydrogenase family. As to quaternary structure, homotetramer. Zn(2+) serves as cofactor.

Its subcellular location is the cytoplasm. The catalysed reaction is a primary alcohol + NAD(+) = an aldehyde + NADH + H(+). It catalyses the reaction a secondary alcohol + NAD(+) = a ketone + NADH + H(+). Its function is as follows. Converts ethanol to acetaldehyde and plays a major role in xylose fermentation. In Scheffersomyces stipitis (strain ATCC 58785 / CBS 6054 / NBRC 10063 / NRRL Y-11545) (Yeast), this protein is Alcohol dehydrogenase 1 (ADH1).